The following is a 168-amino-acid chain: MGVSMALEVLVYLAVLVWTCAWDIDVDVSCSQDWMTVSVSAFSQNKRNPYIFADELYLGQNCRVTQIHAHQYDFIYPVSHCGIRTKVISNEIVCFETEMYFRPRNYCLELQIVPLQCSASRKSVWLMPLSTEEDPKPVKSPFMTDFEATPEELGLLNAHQAASSQNKR.

The signal sequence occupies residues 1–21 (MGVSMALEVLVYLAVLVWTCA).

Belongs to the PLAC1 family. Expressed in ovaries. Highly expressed in the germinal vesicles oocytes and metaphase II oocytes.

It localises to the secreted. It is found in the cytoplasm. This is Oocyte-secreted protein 2 (Oosp2) from Mus musculus (Mouse).